The chain runs to 2919 residues: Cadherin EGF LAG seven-pass G-type receptor 2 (2919 aa).

An N-terminal signal peptide occupies residues 1-31; the sequence is MRSRAASAPLPTPLLPLLLLLLLLPPSPLLG. Residues 32–2380 are Extracellular-facing; sequence DQVGPCRSLG…GEILPLKTLT (2349 aa). A disordered region spans residues 156 to 194; the sequence is LRAGEGSPEESLGGRRKRNVNTAPQFQPPSYQATVPENQ. The segment covering 175–194 has biased composition (polar residues); that stretch reads VNTAPQFQPPSYQATVPENQ. 9 Cadherin domains span residues 182–289, 290–399, 400–505, 506–610, 611–712, 713–815, 816–921, 922–1023, and 1028–1146; these read QPPS…DPVF, EQQE…APQF, SEKR…APIF, VSTP…NPTF, TQPE…RPVF, QSSH…APQF, LRDS…PPVF, EQDE…PPVL, and ILFN…SPLL. Residues asparagine 486, asparagine 557, and asparagine 701 are each glycosylated (N-linked (GlcNAc...) asparagine). Residues asparagine 1036, asparagine 1076, asparagine 1182, and asparagine 1212 are each glycosylated (N-linked (GlcNAc...) asparagine). One can recognise an EGF-like 1; atypical domain in the interval 1228–1286; the sequence is DDNICLREPCENYMRCVSVLRFDSSAPFIASSSVLFRPIHPVGGLRCRCPPGFTGDYCE. Residues 1288–1318 enclose the EGF-like 2; calcium-binding domain; that stretch reads EVDLCYSRPCGPHGRCRSREGGYTCLCLDGY. 6 cysteine pairs are disulfide-bonded: cysteine 1292-cysteine 1303, cysteine 1297-cysteine 1312, cysteine 1314-cysteine 1323, cysteine 1332-cysteine 1343, cysteine 1337-cysteine 1353, and cysteine 1355-cysteine 1365. Residues 1328–1366 enclose the EGF-like 3; calcium-binding domain; that stretch reads HSGRCTPGVCKNGGTCVNLLVGGFKCDCPSGDFEKPFCQ. A Laminin G-like 1 domain is found at 1367 to 1571; sequence VTTRSFPARS…IANNGTVPGC (205 aa). Asparagine 1501 and asparagine 1565 each carry an N-linked (GlcNAc...) asparagine glycan. Cystine bridges form between cysteine 1545/cysteine 1571, cysteine 1578/cysteine 1589, cysteine 1583/cysteine 1598, and cysteine 1600/cysteine 1609. The 37-residue stretch at 1574–1610 folds into the EGF-like 4; calcium-binding domain; sequence KKIVCDSSICHNGGTCVNQWNAFSCECPLGFGGKSCA. Asparagine 1591 is modified ((3R)-3-hydroxyasparagine). Residues 1614–1791 form the Laminin G-like 2 domain; the sequence is ANPQRFLGSS…GESINVEPGC (178 aa). Asparagine 1741 carries an N-linked (GlcNAc...) asparagine glycan. The EGF-like 5; calcium-binding domain occupies 1787–1829; it reads VEPGCSWPDPCDSNPCPTNSYCSNDWDSYSCSCVLGYYGDNCT. Disulfide bonds link cysteine 1791–cysteine 1802, cysteine 1797–cysteine 1817, cysteine 1819–cysteine 1828, cysteine 1832–cysteine 1843, cysteine 1837–cysteine 1855, cysteine 1857–cysteine 1866, cysteine 1887–cysteine 1899, cysteine 1889–cysteine 1906, cysteine 1908–cysteine 1921, cysteine 1924–cysteine 1936, cysteine 1926–cysteine 1943, cysteine 1945–cysteine 1954, and cysteine 1957–cysteine 1969. A glycan (N-linked (GlcNAc...) asparagine) is linked at asparagine 1827. The EGF-like 6; calcium-binding domain maps to 1830–1867; the sequence is NVCDLNPCEHQSVCTRKPNTPHGYICECLPNYLGPYCE. Residues 1883–1922 form the EGF-like 7; calcium-binding domain; it reads TCGPCNCDVSKGFDPDCNKTSGECHCKENHYRPPGSPTCL. Residue asparagine 1900 is glycosylated (N-linked (GlcNAc...) asparagine). The region spanning 1924–1971 is the Laminin EGF-like domain; sequence CDCYPTGSLSRVCDPEDGQCPCKPGVIGRQCDRCDNPFAEVTTNGCEV. N-linked (GlcNAc...) asparagine glycans are attached at residues asparagine 2024, asparagine 2043, and asparagine 2061. A GAIN-B domain is found at 2199–2369; that stretch reads ETTVILPESV…AVLMDMSRRE (171 aa). The disordered stretch occupies residues 2216–2241; the sequence is VRSAGPGEAQETEELARRQRRHPELS. Disulfide bonds link cysteine 2319–cysteine 2351 and cysteine 2339–cysteine 2353. The GPS stretch occupies residues 2319-2369; that stretch reads CVFWNHSILVSGTGGWSARGCEVVFRNESHVSCQCNHMTSFAVLMDMSRRE. Asparagine 2323 and asparagine 2345 each carry an N-linked (GlcNAc...) asparagine glycan. A helical membrane pass occupies residues 2381 to 2401; it reads YVALGVTLAALMLTFLFLTLL. The Cytoplasmic segment spans residues 2402-2413; it reads RALRSNQHGIRR. A helical transmembrane segment spans residues 2414–2433; sequence NLTAALGLAQLVFLLGINQA. Residues 2434 to 2438 lie on the Extracellular side of the membrane; that stretch reads DLPFA. Residues 2439 to 2459 traverse the membrane as a helical segment; the sequence is CTVIAILLHFLYLCTFSWALL. The Cytoplasmic portion of the chain corresponds to 2460–2480; the sequence is EALHLYRALTEVRDVNASPMR. A helical membrane pass occupies residues 2481-2501; that stretch reads FYYMLGWGVPAFITGLAVGLD. The Extracellular portion of the chain corresponds to 2502 to 2518; sequence PEGYGNPDFCWLSVYDT. A helical membrane pass occupies residues 2519-2539; it reads LIWSFAGPVAFAVSMSVFLYI. Over 2540–2563 the chain is Cytoplasmic; it reads LSARASCAAQRQGFEKKGPVSGLR. A helical transmembrane segment spans residues 2564–2584; that stretch reads SSFTVLLLLSATWLLALLSVN. Residues 2585-2591 lie on the Extracellular side of the membrane; the sequence is SDTLLFH. Residues 2592–2612 form a helical membrane-spanning segment; the sequence is YLFAACNCVQGPFIFLSYVVL. Over 2613–2919 the chain is Cytoplasmic; the sequence is SKEVRKALKF…SEFLFFNFLH (307 aa). The segment at 2690–2884 is disordered; the sequence is LNPGQVPPGL…PPRPPPRQSL (195 aa). The segment covering 2718-2730 has biased composition (acidic residues); sequence TDSDSDLSLEDDQ. Polar residues predominate over residues 2791–2800; the sequence is GTTTKENSGS. Over residues 2803 to 2815 the composition is skewed to basic and acidic residues; it reads LEERPRENGDALT. Residues 2857–2868 show a composition bias toward low complexity; that stretch reads GTGSSRGSSISE.

It belongs to the G-protein coupled receptor 2 family. LN-TM7 subfamily. In terms of assembly, heterodimer of 2 chains generated by proteolytic processing; the large extracellular N-terminal fragment and the membrane-bound C-terminal fragment predominantly remain associated and non-covalently linked. Post-translationally, the iron and 2-oxoglutarate dependent 3-hydroxylation of aspartate and asparagine is (R) stereospecific within EGF domains. Autoproteolytically processed at the GPS region of the GAIN-B domain; this cleavage modulates receptor activity. Expressed in the CNS and in the eye.

The protein resides in the cell membrane. Its function is as follows. Receptor that may have an important role in cell/cell signaling during nervous system formation. This Mus musculus (Mouse) protein is Cadherin EGF LAG seven-pass G-type receptor 2.